Here is a 380-residue protein sequence, read N- to C-terminus: Cytochrome b (380 aa).

4 helical membrane passes run 34 to 54, 78 to 99, 114 to 134, and 179 to 199; these read FGSLLGICLATQILTGLLLAA, WLIRNLHANGASFFFICIYLHI, WNTGVILLLTLMATAFVGYVL, and FFTLHFLLPFMIMGLTLIHLT. Heme b-binding residues include H84 and H98. Positions 183 and 197 each coordinate heme b. A ubiquinone is bound at residue H202. Helical transmembrane passes span 227-247, 289-309, 321-341, and 348-368; these read LKDILGFMLMLLPLMTLALFS, LGGVLALAASVLILFLAPLLH, FSQLLFWTLTANVLILTWVGS, and FIIIGQLASLTYFTILLILFP.

The protein belongs to the cytochrome b family. The cytochrome bc1 complex contains 11 subunits: 3 respiratory subunits (MT-CYB, CYC1 and UQCRFS1), 2 core proteins (UQCRC1 and UQCRC2) and 6 low-molecular weight proteins (UQCRH/QCR6, UQCRB/QCR7, UQCRQ/QCR8, UQCR10/QCR9, UQCR11/QCR10 and a cleavage product of UQCRFS1). This cytochrome bc1 complex then forms a dimer. Heme b is required as a cofactor.

The protein localises to the mitochondrion inner membrane. Functionally, component of the ubiquinol-cytochrome c reductase complex (complex III or cytochrome b-c1 complex) that is part of the mitochondrial respiratory chain. The b-c1 complex mediates electron transfer from ubiquinol to cytochrome c. Contributes to the generation of a proton gradient across the mitochondrial membrane that is then used for ATP synthesis. In Bugeranus carunculatus (Wattled crane), this protein is Cytochrome b (MT-CYB).